The primary structure comprises 410 residues: LL-diaminopimelate aminotransferase (410 aa).

Positions 15 and 42 each coordinate substrate. Pyridoxal 5'-phosphate is bound by residues Y72, 108–109 (SK), Y132, N187, Y218, and 246–248 (SFS). Substrate is bound by residues K109, Y132, and N187. K249 is modified (N6-(pyridoxal phosphate)lysine). Pyridoxal 5'-phosphate is bound by residues R257 and N292. Residues N292 and R388 each contribute to the substrate site.

It belongs to the class-I pyridoxal-phosphate-dependent aminotransferase family. LL-diaminopimelate aminotransferase subfamily. As to quaternary structure, homodimer. Requires pyridoxal 5'-phosphate as cofactor.

The catalysed reaction is (2S,6S)-2,6-diaminopimelate + 2-oxoglutarate = (S)-2,3,4,5-tetrahydrodipicolinate + L-glutamate + H2O + H(+). It participates in amino-acid biosynthesis; L-lysine biosynthesis via DAP pathway; LL-2,6-diaminopimelate from (S)-tetrahydrodipicolinate (aminotransferase route): step 1/1. Functionally, involved in the synthesis of meso-diaminopimelate (m-DAP or DL-DAP), required for both lysine and peptidoglycan biosynthesis. Catalyzes the direct conversion of tetrahydrodipicolinate to LL-diaminopimelate. The protein is LL-diaminopimelate aminotransferase of Geotalea daltonii (strain DSM 22248 / JCM 15807 / FRC-32) (Geobacter daltonii).